The primary structure comprises 154 residues: Prefoldin subunit 5 (154 aa).

An N-acetylalanine modification is found at Ala-2. At Lys-42 the chain carries N6-acetyllysine. Ser-56 bears the Phosphoserine mark.

The protein belongs to the prefoldin subunit alpha family. As to quaternary structure, heterohexamer of two PFD-alpha type and four PFD-beta type subunits.

It localises to the nucleus. In terms of biological role, binds specifically to cytosolic chaperonin (c-CPN) and transfers target proteins to it. Binds to nascent polypeptide chain and promotes folding in an environment in which there are many competing pathways for nonnative proteins. Represses the transcriptional activity of MYC. The protein is Prefoldin subunit 5 (PFDN5) of Pongo abelii (Sumatran orangutan).